Reading from the N-terminus, the 434-residue chain is D-amino acid dehydrogenase (434 aa).

3-17 (VIVLGSGVIGTTTAY) contacts FAD.

It belongs to the DadA oxidoreductase family. FAD is required as a cofactor.

The catalysed reaction is a D-alpha-amino acid + A + H2O = a 2-oxocarboxylate + AH2 + NH4(+). Its function is as follows. Oxidative deamination of D-amino acids. The sequence is that of D-amino acid dehydrogenase from Bordetella bronchiseptica (strain ATCC BAA-588 / NCTC 13252 / RB50) (Alcaligenes bronchisepticus).